The sequence spans 561 residues: Inositol phosphate phosphatase SopB (561 aa).

Cysteine 460 is an active-site residue. A CX5R motif motif is present at residues 460-466; it reads CKSGKDR.

Belongs to the phosphatase IpgD/SopB family.

It localises to the secreted. Functionally, converts phosphatidylinositol 3,4,5-trisphosphate (PtdIns 3,4,5-P3) to PtdIns 3-P and prevents the transition of PtdIns 3-P to PtdIns 3,5-P2. It is one of the known effectors injected by Salmonella into the host cell and is required for invasion and for an efficient generation and maintenance of Salmonella-containing vacuole (SVC). Alteration of the phosphoinositide composition of the plasma membrane causes membrane ruffling and actin cytoskeleton rearrangements. The persistence of PtdIns 3-P diverts the SCV from the endocytic pathway resulting in enlarged vesicles, which are essential to create a favorable environment where Salmonella can replicate and avoid immune defenses of the host cell. In Salmonella typhimurium (strain LT2 / SGSC1412 / ATCC 700720), this protein is Inositol phosphate phosphatase SopB (sopB).